The chain runs to 161 residues: Respiratory growth induced protein 1 (161 aa).

A Glycyl lysine isopeptide (Lys-Gly) (interchain with G-Cter in ubiquitin) cross-link involves residue Lys68.

It belongs to the RGI1 family.

Its subcellular location is the cell membrane. Functionally, involved in the control of energetic metabolism and significantly contribute to cell fitness, especially under respiratory growth conditions. This chain is Respiratory growth induced protein 1 (RGI1), found in Saccharomyces cerevisiae (strain RM11-1a) (Baker's yeast).